The chain runs to 516 residues: Glycosyltransferase-like protein gnt15 (516 aa).

The Cytoplasmic segment spans residues 1 to 24 (MSNFYNNNPRRNTFRLTERIKKKP). Residues 25-45 (YQTLIVFILIFLFLYVFGPFG) traverse the membrane as a helical; Signal-anchor for type II membrane protein segment. The Extracellular portion of the chain corresponds to 46 to 516 (EKKSNNNNNN…NDNCLTREHW (471 aa)). The N-linked (GlcNAc...) asparagine glycan is linked to Asn152. The disordered stretch occupies residues 199-250 (DTSNNNNNNNNNNNNNNNNNNNNNNNNNNNNNNNENNDNDNGNNNNNNDNEK). Residues 202–246 (NNNNNNNNNNNNNNNNNNNNNNNNNNNNNNNENNDNDNGNNNNNN) are compositionally biased toward low complexity. Asn386 and Asn412 each carry an N-linked (GlcNAc...) asparagine glycan.

The protein belongs to the glycosyltransferase 8 family. Highly divergent.

Its subcellular location is the membrane. May have a role in modulating cell adhesion and glycosylation. Essential for development. The protein is Glycosyltransferase-like protein gnt15 (gnt15) of Dictyostelium discoideum (Social amoeba).